The chain runs to 932 residues: LPS-assembly protein LptD (932 aa).

An N-terminal signal peptide occupies residues 1-33 (MALKSPAFRRKFPLLVTGGLLALQPLATSYAVA). Residues 54–87 (PVNNLPPRPVHEGAAVSSGTEAASEGETADRPML) are disordered.

Belongs to the LptD family. As to quaternary structure, component of the lipopolysaccharide transport and assembly complex. Interacts with LptE and LptA.

Its subcellular location is the cell outer membrane. In terms of biological role, together with LptE, is involved in the assembly of lipopolysaccharide (LPS) at the surface of the outer membrane. The chain is LPS-assembly protein LptD from Pseudomonas putida (strain GB-1).